A 487-amino-acid chain; its full sequence is MFRRALRLGLGPGLPYRGLRTRKGGFTLDWDAKVSDFKKKVDSILPGKKYEVLYDTSHLPPEQADVVIIGGGILGLSVAFWLKKLESRRGAIRVLVVEQDHTYSRASSTGPSVGGIWQQFSVPENVQLSLFSINFLRNINEYLAVVDAPPVELQFNPSGCLLLASEKDAATLENNVKMQRQEGAKVCLMSPEQLQTKFPWINVEGVALASYGLEDEGWFDAWSLLQGLRRKVQSMGVFFCQGEVTRFITSSTPMKTPTGEHVVLRRINNVHVKMDKSLEYQPVECAVVINAAGAWSGKIAELAGVGKGLPGTLQGTKLPVEPRKRYVHLWHCPQGPGLETPLVADISGVYFRREGLGSNYLGGCSPTEEEEPDPTNLNVDHDFFQNKVWPHLVQRVPSFKTLEVQSAWAGYYDYNTFDQNGVVGPHPLVVNMYFATGFSGRGLQHAPGIGRAVAEIMLEGHFKTIDMSPFLFTRFYLGEKLQEYNIL.

The chain crosses the membrane as a helical span at residues E62–L82.

In terms of assembly, associates with components of the mitochondrial respiratory chain complex I. Requires FAD as cofactor.

Its subcellular location is the mitochondrion inner membrane. Required for the assembly of the mitochondrial membrane respiratory chain NADH dehydrogenase (Complex I). Involved in mid-late stages of complex I assembly. In Mus musculus (Mouse), this protein is FAD-dependent oxidoreductase domain-containing protein 1 (Foxred1).